The chain runs to 142 residues: Large ribosomal subunit protein uL13 (142 aa).

Belongs to the universal ribosomal protein uL13 family. Part of the 50S ribosomal subunit.

Functionally, this protein is one of the early assembly proteins of the 50S ribosomal subunit, although it is not seen to bind rRNA by itself. It is important during the early stages of 50S assembly. This chain is Large ribosomal subunit protein uL13, found in Treponema pallidum (strain Nichols).